Here is a 358-residue protein sequence, read N- to C-terminus: tRNA-specific 2-thiouridylase MnmA (358 aa).

ATP-binding positions include 22-29 (LVSGGIDS) and F48. C105 acts as the Nucleophile in catalysis. A disulfide bond links C105 and C201. G129 is a binding site for ATP. The interval 151–153 (KEQ) is interaction with tRNA. C201 (cysteine persulfide intermediate) is an active-site residue. The interval 306–307 (RY) is interaction with tRNA.

Belongs to the MnmA/TRMU family.

It is found in the cytoplasm. The catalysed reaction is S-sulfanyl-L-cysteinyl-[protein] + uridine(34) in tRNA + AH2 + ATP = 2-thiouridine(34) in tRNA + L-cysteinyl-[protein] + A + AMP + diphosphate + H(+). Functionally, catalyzes the 2-thiolation of uridine at the wobble position (U34) of tRNA, leading to the formation of s(2)U34. This Desulfosudis oleivorans (strain DSM 6200 / JCM 39069 / Hxd3) (Desulfococcus oleovorans) protein is tRNA-specific 2-thiouridylase MnmA.